The chain runs to 866 residues: Dynamin-2 (866 aa).

The Dynamin-type G domain maps to 28–294; that stretch reads HLDLPQIAVV…LTNHIRESLP (267 aa). A G1 motif region spans residues 38–45; that stretch reads GGQSAGKS. GDP-binding residues include Ser41, Gly43, Lys44, Ser45, Ser46, Arg59, and Gly60. A G2 motif region spans residues 64–66; that stretch reads VTR. A G3 motif region spans residues 136-139; it reads DLPG. Positions 205-208 are G4 motif; it reads TKLD. Positions 206, 208, and 211 each coordinate GDP. Tyr231 carries the post-translational modification Phosphotyrosine. Residues 235–238 are G5 motif; it reads VNRS. Positions 236, 237, and 239 each coordinate GDP. The residue at position 299 (Lys299) is an N6-acetyllysine. Positions 515 to 621 constitute a PH domain; that stretch reads QVIRRGWLTI…WKASFLRAGV (107 aa). At Tyr593 the chain carries Phosphotyrosine. Residue Lys594 is modified to N6-acetyllysine. Residues 649–740 form the GED domain; that stretch reads VETIRNLVDS…IIGDISTSTV (92 aa). Residues 737–866 form a disordered region; the sequence is TSTVSTPVPP…IRPAEPSLLD (130 aa). Phosphothreonine is present on Thr751. Residues 752 to 763 are compositionally biased toward polar residues; sequence WIQNTSSHSPTP. Ser760 is subject to Phosphoserine; by CDK1. Pro residues-rich tracts occupy residues 784–794, 802–811, and 822–851; these read TPGPPLIPVPV, PPIPSRPGPH, and SAPPQIPSRPARIPPGIPPGVPSRRPPAAP.

This sequence belongs to the TRAFAC class dynamin-like GTPase superfamily. Dynamin/Fzo/YdjA family. In terms of assembly, oligomerizes into a helical polymer that self-assembles around the vesicle membrane, when associated to the menbrane through lipid binding. Interacts with SHANK1 and SHANK2. Interacts with SNX9. Interacts (via C-terminal proline-rich domain (PRD)) with SNX18 (via SH3 domain); this interaction regulates ATG9A and ATG16L1 trafficking from recycling endosomes to sites of autophagosome formation. Interacts with SNX33 (via SH3 domain). Interacts with MYO1E (via SH3 domain). Interacts with PSTPIP1 (via SH3 domain). Interacts with CTNND2. Interacts (via C-terminal proline-rich domain (PRD)) with BIN1 (via SH3 domain); this interaction allows the recruitment of DNM2 to the membrane tubules and inhibits self-assembly-stimulated GTPase activity on the membrane. Interacts with GABARAP, GABARAPL1 and GABARAPL2. Interacts with MAP1LC3B (the lipidate and non-lipidated LC3 form); this interaction mediates recycling endosome scission leading to autophagosome release. Interacts with ITSN1. Interacts with MYOF. Interacts (via C-terminal proline-rich domain (PRD)) with SH3BP4 (via SH3 domain); this interaction controls the GTPase activity and is prevented by EGFR-induced tyrosine phosphorylation of either DNM2 or SH3BP4. May interact with PIK3C3. May be a component of a complex composed of RAB5A (in GDP-bound form), DYN2 and PIK3C3. Interacts with SDC4; this interaction is markedly enhanced at focal ahesion site upon induction of focal adhesions and stress-fiber formation. Interacts with ACTN1. Interacts with CTTN; this interaction stimulates the intrinsic GTPase activity of DNM2 and stabilizes the association of DNM2 and actin filaments; in addition this interaction is stimulated by ligand binding to the receptor, leading to the recruitment of the DNM2-CTTN complex to the sequestered receptor-ligand complex to its internalization. Interacts with NOSTRIN (via SH3 domain); this interaction allows the recruitment of NOS3 to dynamin-positive structures. Interacts with TUBG1; this interaction may participate in centrosome cohesion. Post-translationally, phosphorylation at Ser-844 by GSK3-alpha relieves the inhibition of BIN1 and promotes endocytosis. Phosphorylation at Ser-760 by CDK1 is greatly increased upon mitotic entry. It regulates cytokinesis downstream of calcineurin, and does not affect clathrin-mediated endocytosis. Dephosphorylated by calcineurin/PP2 during cytokinesis in a Ca(2+)- and calmodulin-dependent manner. Phosphorylated on tyrosine residues by EGFR and after activation of SRC.

It is found in the cytoplasm. It localises to the cytoskeleton. The protein localises to the cytoplasmic vesicle. Its subcellular location is the clathrin-coated vesicle. The protein resides in the cell projection. It is found in the uropodium. It localises to the endosome. The protein localises to the microtubule organizing center. Its subcellular location is the centrosome. The protein resides in the centriole. It is found in the recycling endosome. It localises to the phagocytic cup. The protein localises to the phagosome membrane. Its subcellular location is the podosome. The protein resides in the cell junction. It is found in the postsynaptic density. It localises to the synapse. The protein localises to the synaptosome. Its subcellular location is the midbody. The protein resides in the membrane. It is found in the clathrin-coated pit. It carries out the reaction GTP + H2O = GDP + phosphate + H(+). Its function is as follows. Catalyzes the hydrolysis of GTP and utilizes this energy to mediate vesicle scission at plasma membrane during endocytosis and filament remodeling at many actin structures during organization of the actin cytoskeleton. Plays an important role in vesicular trafficking processes, namely clathrin-mediated endocytosis (CME), exocytic and clathrin-coated vesicle from the trans-Golgi network, and PDGF stimulated macropinocytosis. During vesicular trafficking process, associates to the membrane, through lipid binding, and self-assembles into ring-like structure through oligomerization to form a helical polymer around the vesicle membrane and leading to vesicle scission. Plays a role in organization of the actin cytoskeleton by mediating arrangement of stress fibers and actin bundles in podocytes. During organization of the actin cytoskeleton, self-assembles into ring-like structure that directly bundles actin filaments to form typical membrane tubules decorated with dynamin spiral polymers. Self-assembly increases GTPase activity and the GTP hydrolysis causes the rapid depolymerization of dynamin spiral polymers, and results in dispersion of actin bundles. Remodels, through its interaction with CTTN, bundled actin filaments in a GTPase-dependent manner and plays a role in orchestrating the global actomyosin cytoskeleton. The interaction with CTTN stabilizes the interaction of DNM2 and actin filaments and stimulates the intrinsic GTPase activity that results in actin filament-barbed ends and increases the sensitivity of filaments in bundles to the actin depolymerizing factor, CFL1. Plays a role in the autophagy process, by participating in the formation of ATG9A vesicles destined for the autophagosomes through its interaction with SNX18, by mediating recycling endosome scission leading to autophagosome release through MAP1LC3B interaction. Also regulates maturation of apoptotic cell corpse-containing phagosomes by recruiting PIK3C3 to the phagosome membrane. Also plays a role in cytokinesis. May participate in centrosome cohesion through its interaction with TUBG1. Plays a role in the regulation of neuron morphology, axon growth and formation of neuronal growth cones. Involved in membrane tubulation. The sequence is that of Dynamin-2 from Bos taurus (Bovine).